The primary structure comprises 85 residues: Large ribosomal subunit protein bL27 (85 aa).

Residues 1 to 26 (MAHKKGVGSSRNGRDSNPKMLGVKRF) form a disordered region.

This sequence belongs to the bacterial ribosomal protein bL27 family.

This Roseiflexus sp. (strain RS-1) protein is Large ribosomal subunit protein bL27.